We begin with the raw amino-acid sequence, 635 residues long: Cytoplasmic polyadenylation element-binding protein 4 (635 aa).

Disordered regions lie at residues 1–70 (MQDD…TLRL), 149–284 (GFGG…GFNT), and 337–369 (LFPM…PHQN). Polar residues predominate over residues 14–30 (PQLQQESQEGQDKQTLS). Residues 166–182 (PSPHPHFQHPHNQHRRS) show a composition bias toward basic residues. Over residues 216-231 (GSYQSPSSTPSSTSWS) the composition is skewed to low complexity. The segment covering 232-241 (PGGGYGGWGS) has biased composition (gly residues). Positions 254 to 283 (PLNSISPLKKSFPNNQTQTQKYPRNNSGFN) are enriched in polar residues. Over residues 341–353 (EDERSYGEDERSD) the composition is skewed to basic and acidic residues. RRM domains follow at residues 378–469 (RKVF…PWNL) and 486–568 (KTIF…PYVL).

Belongs to the RRM CPEB family.

The protein localises to the cytoplasm. It localises to the cell projection. Its subcellular location is the dendrite. The protein resides in the dendritic spine. It is found in the postsynaptic density. The protein localises to the axon. It localises to the growth cone. Its subcellular location is the endoplasmic reticulum. The protein resides in the perinuclear region. Functionally, sequence-specific RNA-binding protein that binds to the cytoplasmic polyadenylation element (CPE), an uridine-rich sequence element (consensus sequence 5'-UUUUUAU-3') within the mRNA 3'-UTR. RNA binding results in a clear conformational change analogous to the Venus fly trap mechanism. The sequence is that of Cytoplasmic polyadenylation element-binding protein 4 (cpeb4) from Danio rerio (Zebrafish).